The chain runs to 142 residues: Baculoviral IAP repeat-containing protein 5 (142 aa).

Residues 18-88 (RISTFKNWPF…KHSSGCAFLS (71 aa)) form a BIR repeat. Ser-20 carries the post-translational modification Phosphoserine; by AURKC. N6-acetyllysine is present on Lys-23. Phosphothreonine; by CDK1 and CDK15 is present on Thr-34. Thr-48 carries the phosphothreonine modification. Residues Cys-57, Cys-60, His-77, and Cys-84 each contribute to the Zn(2+) site. An N6-acetyllysine mark is found at Lys-90, Lys-110, Lys-112, and Lys-115. Thr-117 carries the phosphothreonine; by AURKB modification. Lys-129 carries the post-translational modification N6-acetyllysine.

It belongs to the IAP family. As to quaternary structure, monomer or homodimer. Exists as a homodimer in the apo state and as a monomer in the CPC-bound state. The monomer protects cells against apoptosis more efficiently than the dimer. Only the dimeric form is capable of enhancing tubulin stability in cells. When phosphorylated, interacts with LAMTOR5/HBXIP; the resulting complex binds pro-CASP9, as well as active CASP9, but much less efficiently. Component of the chromosomal passenger complex (CPC) composed of at least BIRC5/survivin, CDCA8/borealin, INCENP, AURKB or AURKC; in the complex forms a triple-helix bundle-based subcomplex with INCENP and CDCA8. Interacts with JTB. Interacts (via BIR domain) with histone H3 phosphorylated at 'Thr-3' (H3pT3). Interacts with EVI5. Interacts with GTP-bound RAN in both the S and M phases of the cell cycle. Interacts with USP9X. Interacts with tubulin. Interacts with BIRC2/c-IAP1. The acetylated form at Lys-129 interacts with STAT3. The monomeric form deacetylated at Lys-129 interacts with XPO1/CRM1. The monomeric form interacts with XIAP/BIRC4. Both the dimeric and monomeric form can interact with DIABLO/SMAC. Interacts with BIRC6/bruce. Interacts with FBXL7; this interaction facilitates the polyubiquitination and subsequent proteasomal degradation of BIRC5 by the SCF(FBXL7) E3 ubiquitin-protein ligase complex. Ubiquitinated by the Cul9-RING ubiquitin-protein ligase complex, leading to its degradation. Ubiquitination is required for centrosomal targeting. Deubiquitinated by USP35 or USP38; leading to stabilization. In terms of processing, acetylation at Lys-129 results in its homodimerization, while deacetylation promotes the formation of monomers which heterodimerize with XPO1/CRM1 which facilitates its nuclear export. The acetylated form represses STAT3 transactivation. The dynamic equilibrium between its acetylation and deacetylation at Lys-129 determines its interaction with XPO1/CRM1, its subsequent subcellular localization, and its ability to inhibit STAT3 transactivation. Post-translationally, in vitro phosphorylation at Thr-117 by AURKB prevents interaction with INCENP and localization to mitotic chromosomes. Phosphorylation at Thr-48 by CK2 is critical for its mitotic and anti-apoptotic activities. Phosphorylation at Thr-34 by CDK15 is critical for its anti-apoptotic activity. Phosphorylation at Ser-20 by AURKC is critical for regulation of proper chromosome alignment and segregation, and possibly cytokinesis.

It localises to the cytoplasm. The protein localises to the nucleus. Its subcellular location is the chromosome. It is found in the centromere. The protein resides in the cytoskeleton. It localises to the spindle. The protein localises to the kinetochore. Its subcellular location is the midbody. Functionally, multitasking protein that has dual roles in promoting cell proliferation and preventing apoptosis. Component of a chromosome passage protein complex (CPC) which is essential for chromosome alignment and segregation during mitosis and cytokinesis. Acts as an important regulator of the localization of this complex; directs CPC movement to different locations from the inner centromere during prometaphase to midbody during cytokinesis and participates in the organization of the center spindle by associating with polymerized microtubules. Involved in the recruitment of CPC to centromeres during early mitosis via association with histone H3 phosphorylated at 'Thr-3' (H3pT3) during mitosis. The complex with RAN plays a role in mitotic spindle formation by serving as a physical scaffold to help deliver the RAN effector molecule TPX2 to microtubules. May counteract a default induction of apoptosis in G2/M phase. The acetylated form represses STAT3 transactivation of target gene promoters. May play a role in neoplasia. Inhibitor of CASP3 and CASP7. Essential for the maintenance of mitochondrial integrity and function. This Sus scrofa (Pig) protein is Baculoviral IAP repeat-containing protein 5 (BIRC5).